Consider the following 214-residue polypeptide: Osteoclast-stimulating factor 1 (214 aa).

The region spanning 12 to 71 (GQVKVFRALFTFDPRTPDELYFEEGDILYISDTSDTNWWKGTCRGRTGLIPSNYVAEQAE) is the SH3 domain. ANK repeat units follow at residues 72–101 (TIDHPMHEAAKRGNLSWLRECVENKVGING), 105–135 (AGNTALYWACHGGHKDVVELLLNQPSVELNQ), and 139–168 (LGDTVLHAAAWKGYSDIVEMLLDKNARTDI).

As to expression, ubiquitously expressed.

It is found in the cytoplasm. In terms of biological role, induces bone resorption, acting probably through a signaling cascade which results in the secretion of factor(s) enhancing osteoclast formation and activity. This is Osteoclast-stimulating factor 1 (ostf1) from Monopterus albus (Swamp eel).